The following is a 550-amino-acid chain: Calcium-dependent protein kinase 20 (550 aa).

Residues 1–58 (MGNCCVTPEGSGRGRKKQQQEQKQKQKEPKQQQQQQKKGKKPNPFSIEYNRSSAPSGH) are disordered. A lipid anchor (N-myristoyl glycine) is attached at G2. Residues 18–30 (QQQEQKQKQKEPK) show a composition bias toward basic and acidic residues. Residues 75 to 333 (YELGGELGRG…AQQVLDHPWL (259 aa)) enclose the Protein kinase domain. ATP-binding positions include 81–89 (LGRGEFGVT) and K104. The active-site Proton acceptor is the D199. The segment at 339 to 369 (APNVNLGETVKARLQQFSVMNKFKKHALRVI) is autoinhibitory domain. 4 consecutive EF-hand domains span residues 376 to 411 (EEVA…LGHQ), 412 to 447 (MADA…LRKI), 448 to 483 (GNDE…DLGA), and 484 to 519 (NHEE…GTDW). Ca(2+)-binding residues include D389, N391, D393, M395, E400, D425, D427, N429, S431, E436, D461, N463, S465, Y467, E472, D497, D499, D501, K503, and E508.

Belongs to the protein kinase superfamily. Ser/Thr protein kinase family. CDPK subfamily. As to expression, expressed in roots and leaf blades.

The protein resides in the membrane. The catalysed reaction is L-seryl-[protein] + ATP = O-phospho-L-seryl-[protein] + ADP + H(+). It carries out the reaction L-threonyl-[protein] + ATP = O-phospho-L-threonyl-[protein] + ADP + H(+). Activated by calcium. Autophosphorylation may play an important role in the regulation of the kinase activity. In terms of biological role, may play a role in signal transduction pathways that involve calcium as a second messenger. In Oryza sativa subsp. japonica (Rice), this protein is Calcium-dependent protein kinase 20.